Reading from the N-terminus, the 384-residue chain is Probable protein phosphatase 2C 42 (384 aa).

In terms of domain architecture, PPM-type phosphatase spans 58–358; it reads DFSMAVIQAN…DDITVIVVFL (301 aa). Mn(2+)-binding residues include Asp-89, Gly-90, Asp-290, and Asp-349.

This sequence belongs to the PP2C family. Mg(2+) serves as cofactor. It depends on Mn(2+) as a cofactor.

It catalyses the reaction O-phospho-L-seryl-[protein] + H2O = L-seryl-[protein] + phosphate. The enzyme catalyses O-phospho-L-threonyl-[protein] + H2O = L-threonyl-[protein] + phosphate. Dephosphorylates and represses plasma membrane H(+)-ATPases (PM H(+)-ATPases, e.g. AHA1 and AHA2), thus influencing negatively plant growth and fitness. Promotes the apical hook maintenance of etiolated seedlings. This is Probable protein phosphatase 2C 42 from Arabidopsis thaliana (Mouse-ear cress).